Here is a 239-residue protein sequence, read N- to C-terminus: RNA polymerase sigma factor FliA (239 aa).

Residues Leu-16–Trp-88 form a sigma-70 factor domain-2 region. Positions Asp-43–Gln-46 match the Interaction with polymerase core subunit RpoC motif. Residues Asn-96–Arg-166 are sigma-70 factor domain-3. Residues Ala-185–Arg-233 are sigma-70 factor domain-4. A DNA-binding region (H-T-H motif) is located at residues Leu-207 to Ser-226.

Belongs to the sigma-70 factor family. FliA subfamily.

The protein resides in the cytoplasm. Functionally, sigma factors are initiation factors that promote the attachment of RNA polymerase to specific initiation sites and are then released. This sigma factor controls the expression of flagella-related genes. The polypeptide is RNA polymerase sigma factor FliA (Escherichia coli O157:H7).